Reading from the N-terminus, the 503-residue chain is Maturase K (503 aa).

It belongs to the intron maturase 2 family. MatK subfamily.

Its subcellular location is the plastid. It localises to the chloroplast. Usually encoded in the trnK tRNA gene intron. Probably assists in splicing its own and other chloroplast group II introns. The chain is Maturase K from Rubus ursinus (California blackberry).